We begin with the raw amino-acid sequence, 195 residues long: Antigenic thaumatin-like protein ARB_01183 (195 aa).

A signal peptide spans 1 to 22; sequence MHSNTAVIALSALAALVPAALA. Disulfide bonds link Cys-125/Cys-153 and Cys-130/Cys-137. Positions 171–195 are disordered; sequence GPKKMFKPVQEKAANRPRHPHARPE. Residues 185–195 show a composition bias toward basic residues; that stretch reads NRPRHPHARPE.

Belongs to the thaumatin family.

It is found in the secreted. Functionally, might be involved in the inhibition of growth of fungal competitors and pathogenicity. The protein is Antigenic thaumatin-like protein ARB_01183 of Arthroderma benhamiae (strain ATCC MYA-4681 / CBS 112371) (Trichophyton mentagrophytes).